A 206-amino-acid polypeptide reads, in one-letter code: Uridine kinase (206 aa).

11–18 (GGTGSGKS) contacts ATP.

This sequence belongs to the uridine kinase family.

The protein resides in the cytoplasm. It carries out the reaction uridine + ATP = UMP + ADP + H(+). The catalysed reaction is cytidine + ATP = CMP + ADP + H(+). It functions in the pathway pyrimidine metabolism; CTP biosynthesis via salvage pathway; CTP from cytidine: step 1/3. Its pathway is pyrimidine metabolism; UMP biosynthesis via salvage pathway; UMP from uridine: step 1/1. The sequence is that of Uridine kinase from Clostridium botulinum (strain Okra / Type B1).